A 202-amino-acid polypeptide reads, in one-letter code: ATP-dependent Clp protease proteolytic subunit (202 aa).

The active-site Nucleophile is the S106. Residue H131 is part of the active site.

The protein belongs to the peptidase S14 family. As to quaternary structure, fourteen ClpP subunits assemble into 2 heptameric rings which stack back to back to give a disk-like structure with a central cavity, resembling the structure of eukaryotic proteasomes.

Its subcellular location is the cytoplasm. The catalysed reaction is Hydrolysis of proteins to small peptides in the presence of ATP and magnesium. alpha-casein is the usual test substrate. In the absence of ATP, only oligopeptides shorter than five residues are hydrolyzed (such as succinyl-Leu-Tyr-|-NHMec, and Leu-Tyr-Leu-|-Tyr-Trp, in which cleavage of the -Tyr-|-Leu- and -Tyr-|-Trp bonds also occurs).. Functionally, cleaves peptides in various proteins in a process that requires ATP hydrolysis. Has a chymotrypsin-like activity. Plays a major role in the degradation of misfolded proteins. The sequence is that of ATP-dependent Clp protease proteolytic subunit from Methylibium petroleiphilum (strain ATCC BAA-1232 / LMG 22953 / PM1).